Consider the following 442-residue polypeptide: Protein UNUSUAL FLORAL ORGANS (442 aa).

An interaction with SKP1A region spans residues methionine 1 to threonine 85. One can recognise an F-box domain in the interval glycine 44–tyrosine 90.

In terms of assembly, part of a putative SCF (ASK/Cullin/F-box) ubiquitin ligase complex. Interacts with SKP1A/ASK1, SKP1B/ASK2 and ASK11.

It is found in the nucleus. Its pathway is protein modification; protein ubiquitination. Component of SCF(ASK-cullin-F-box) E3 ubiquitin ligase complexes, which may mediate the ubiquitination and subsequent proteasomal degradation of target proteins. Considered as a meristem identity factor required for normal growth of the young floral meristem. Acts together with LEAFY to positively regulate the B class floral homeotic genes APETALA3 and PISTILLATA. In this way, operates as a region-specific regulator for petal and stamen development. Alternatively, may play a role as a negative regulator of the C class floral homeotic genes. Interacts together with the SKP1-like protein ASK1 to form a ubiquitin E3 ligase complex and could indirectly promote the ubiquitination and degradation of specific proteins controlling the floral primordia development like repressors of B class floral homeotic genes. This is Protein UNUSUAL FLORAL ORGANS (UFO) from Arabidopsis thaliana (Mouse-ear cress).